The chain runs to 2039 residues: PHD finger protein 3 (2039 aa).

Ser-97 and Ser-125 each carry phosphoserine. A compositionally biased stretch (polar residues) spans 144–168 (STIAKRSNAAPLSNTKKASGKTVST). Residues 144–178 (STIAKRSNAAPLSNTKKASGKTVSTAKAGVKQPER) are disordered. 2 positions are modified to phosphoserine: Ser-283 and Ser-299. A compositionally biased stretch (basic and acidic residues) spans 460-472 (ESHETANLQDDRN). Disordered regions lie at residues 460-492 (ESHE…KHTK), 528-555 (VKRN…IDKE), and 596-685 (LSDK…SLDE). Low complexity predominate over residues 473 to 483 (SQSSSVSYLES). Basic and acidic residues predominate over residues 596-612 (LSDKSHAHPGCLKEPHH). Residues 617–640 (GHVSHSSQKQCHKPQQQAPAMKTN) are compositionally biased toward polar residues. Basic and acidic residues predominate over residues 642–670 (HVKEELEHPGVEHFKEEDKLKLKKPEKNL). Lys-644 participates in a covalent cross-link: Glycyl lysine isopeptide (Lys-Gly) (interchain with G-Cter in SUMO2). Phosphoserine is present on Ser-680. The PHD-type zinc finger occupies 717–772 (SKQCGFCKKPHGNRFMVGCGRCDDWFHGDCVGLSLSQAQQMGEEDKEYVCVKCCAE). Residues 860 to 904 (GQPVLPRRSSEEKSEKIPKESTTVTCTGEKASKPGTHEKQEMKKK) are disordered. Composition is skewed to basic and acidic residues over residues 867–878 (RSSEEKSEKIPK) and 889–900 (KASKPGTHEKQE). The TFIIS central domain occupies 927-1046 (IRQSVRHSLK…MIEKEQREVE (120 aa)). Lys-964 participates in a covalent cross-link: Glycyl lysine isopeptide (Lys-Gly) (interchain with G-Cter in SUMO2). Ser-1014 is subject to Phosphoserine. The disordered stretch occupies residues 1078 to 1109 (EPAANKSLEKPEGSEKQKEEVDSMSKDTTSQH). Positions 1084–1102 (SLEKPEGSEKQKEEVDSMS) are enriched in basic and acidic residues. Phosphoserine occurs at positions 1133, 1148, and 1178. Disordered regions lie at residues 1171 to 1191 (FEEE…RPEM), 1360 to 1380 (STSH…PPDK), and 1581 to 1623 (KQEE…VGKG). Residues 1581-1598 (KQEETVESKEKTLKRQLQ) are compositionally biased toward basic and acidic residues. Phosphoserine is present on residues Ser-1614 and Ser-1642. 2 disordered regions span residues 1643-1684 (PQFI…LPGL) and 1776-1800 (PSKS…PMRP). Positions 1666 to 1684 (ESKDGDSCRNGEKHMLPGL) are enriched in basic and acidic residues. Low complexity predominate over residues 1781–1797 (TFTSRSTSPRTSTNFSP). 2 positions are modified to asymmetric dimethylarginine: Arg-1867 and Arg-1877. Positions 1884–2039 (FYQVKDIRRP…DHTDRTKSKR (156 aa)) are disordered. Composition is skewed to basic and acidic residues over residues 1888-1902 (KDIR…DPWG) and 1912-2039 (PFNR…KSKR). 2 positions are modified to phosphoserine: Ser-1898 and Ser-1925. A Glycyl lysine isopeptide (Lys-Gly) (interchain with G-Cter in SUMO2) cross-link involves residue Lys-1931.

Ubiquitous. Expression is significantly reduced or lost in glioblastomas, glioblastoma cell lines, anaplastic astrocytomas, and astrocytomas.

The sequence is that of PHD finger protein 3 (PHF3) from Homo sapiens (Human).